Consider the following 178-residue polypeptide: ATP synthase subunit delta (178 aa).

This sequence belongs to the ATPase delta chain family. In terms of assembly, F-type ATPases have 2 components, F(1) - the catalytic core - and F(0) - the membrane proton channel. F(1) has five subunits: alpha(3), beta(3), gamma(1), delta(1), epsilon(1). F(0) has three main subunits: a(1), b(2) and c(10-14). The alpha and beta chains form an alternating ring which encloses part of the gamma chain. F(1) is attached to F(0) by a central stalk formed by the gamma and epsilon chains, while a peripheral stalk is formed by the delta and b chains.

The protein localises to the cell membrane. Functionally, f(1)F(0) ATP synthase produces ATP from ADP in the presence of a proton or sodium gradient. F-type ATPases consist of two structural domains, F(1) containing the extramembraneous catalytic core and F(0) containing the membrane proton channel, linked together by a central stalk and a peripheral stalk. During catalysis, ATP synthesis in the catalytic domain of F(1) is coupled via a rotary mechanism of the central stalk subunits to proton translocation. This protein is part of the stalk that links CF(0) to CF(1). It either transmits conformational changes from CF(0) to CF(1) or is implicated in proton conduction. The polypeptide is ATP synthase subunit delta (Streptococcus equinus (Streptococcus bovis)).